A 1396-amino-acid chain; its full sequence is Sterol 3-beta-glucosyltransferase (1396 aa).

Residues M1 to L16 show a composition bias toward basic and acidic residues. Disordered stretches follow at residues M1 to Q21, D40 to M64, A83 to P196, and E209 to Q232. The span at E94 to F107 shows a compositional bias: basic and acidic residues. Positions R186 to P196 are enriched in low complexity. The GRAM 1 domain maps to R238–T273. Positions R289–F388 constitute a PH domain. Disordered regions lie at residues G460 to S532 and T571 to D627. Composition is skewed to polar residues over residues G484 to S532 and T571 to R584. The span at R588–L602 shows a compositional bias: basic and acidic residues. The GRAM 2 domain maps to E717–K783. S905, R906, D908, A1208, H1210, H1223, G1227, T1228, D1247, and Q1248 together coordinate UDP-alpha-D-glucose. The segment covering S1324–Q1343 has biased composition (low complexity). A disordered region spans residues S1324–N1346.

It belongs to the glycosyltransferase 28 family.

The protein resides in the cytoplasm. Its subcellular location is the preautophagosomal structure membrane. It carries out the reaction a sterol + UDP-alpha-D-glucose = a sterol 3-beta-D-glucoside + UDP + H(+). The catalysed reaction is ergosterol + UDP-alpha-D-glucose = ergosteryl 3-beta-D-glucoside + UDP + H(+). Functionally, sterol glycosyltransferase responsible for the glycosylation of ergosterol to form ergosterol-glucoside. In Emericella nidulans (strain FGSC A4 / ATCC 38163 / CBS 112.46 / NRRL 194 / M139) (Aspergillus nidulans), this protein is Sterol 3-beta-glucosyltransferase.